Here is a 660-residue protein sequence, read N- to C-terminus: Protein FAM161A (660 aa).

2 coiled-coil regions span residues 93–120 (EEYF…YQDK) and 296–320 (YHDL…ALLA). The required for interaction with CFAP418 stretch occupies residues 341 to 525 (QLRDFLKYKK…PTVSSRGREQ (185 aa)). Residues K468 and K484 each participate in a glycyl lysine isopeptide (Lys-Gly) (interchain with G-Cter in SUMO2) cross-link. Residues 522-552 (GREQAVRKSEKERMREYQRELEEREEKLKKR) are a coiled coil. Residues 605 to 660 (KSVTEDKESFNEEEKIEERENGEENYFIDTNSQDSYKEKDEANEESEEEKSVEESH) form a disordered region. Residues 606–623 (SVTEDKESFNEEEKIEER) show a composition bias toward basic and acidic residues. A compositionally biased stretch (acidic residues) spans 645-660 (EANEESEEEKSVEESH).

The protein belongs to the FAM161 family. In terms of assembly, interacts (via central region) with CFAP418 (via N-terminus); the interaction is direct. Interacts (via C-terminus) with microtubules. Interacts with LCA5. Interacts with CEP290. Interacts with SDCCAG8. Interacts with FAM161B. Interacts with POC1B. Interacts with CEP78. Forms a microtubule-associated complex with POC5, CETN2 and POC1B. Interacts with CCDC15. As to expression, isoform 1 and isoform 3 are widely expressed with highest levels in retina and testis, with isoform 1 being the most abundant in all tissues tested.

Its subcellular location is the cytoplasm. The protein resides in the cytoskeleton. It is found in the cilium basal body. The protein localises to the cell projection. It localises to the cilium. Its subcellular location is the microtubule organizing center. The protein resides in the centrosome. It is found in the centriole. Its function is as follows. Involved in ciliogenesis. The polypeptide is Protein FAM161A (FAM161A) (Homo sapiens (Human)).